The following is a 154-amino-acid chain: uncharacterized protein (154 aa).

This is an uncharacterized protein from Schizosaccharomyces pombe (strain 972 / ATCC 24843) (Fission yeast).